The primary structure comprises 126 residues: Putative lipoprotein LprD (126 aa).

An N-terminal signal peptide occupies residues 1–19 (MSTTRRRRPALVALVTIAA). Residue Cys20 is the site of N-palmitoyl cysteine attachment. Cys20 is lipidated: S-diacylglycerol cysteine. The helical transmembrane segment at 44–64 (GYALQWPLFAGFCLYTYHNFV) threads the bilayer.

To M.tuberculosis Rv1343c.

The protein resides in the cell membrane. The sequence is that of Putative lipoprotein LprD (lprD) from Mycobacterium leprae (strain TN).